Reading from the N-terminus, the 243-residue chain is Uridylate kinase (243 aa).

Residue 12 to 15 participates in ATP binding; sequence KLSG. Residue glycine 54 participates in UMP binding. Residues glycine 55 and arginine 59 each coordinate ATP. A UMP-binding site is contributed by 135–142; sequence TGNPYFTT. 3 residues coordinate ATP: asparagine 163, tyrosine 169, and aspartate 172.

It belongs to the UMP kinase family. In terms of assembly, homohexamer.

The protein localises to the cytoplasm. It carries out the reaction UMP + ATP = UDP + ADP. The protein operates within pyrimidine metabolism; CTP biosynthesis via de novo pathway; UDP from UMP (UMPK route): step 1/1. Inhibited by UTP. In terms of biological role, catalyzes the reversible phosphorylation of UMP to UDP. This Roseiflexus sp. (strain RS-1) protein is Uridylate kinase.